The primary structure comprises 734 residues: Elongation factor G, mitochondrial (734 aa).

A mitochondrion-targeting transit peptide spans 1-32; the sequence is MTSFLTSRFGGLALRNVMNNKNGINSFGLRCF. Positions 38 to 318 constitute a tr-type G domain; sequence SGLRNIGISA…GVIKYLPSPN (281 aa). GTP contacts are provided by residues 47–54, 114–118, and 168–171; these read AHIDSGKT, DTPGH, and NKLD.

Belongs to the TRAFAC class translation factor GTPase superfamily. Classic translation factor GTPase family. EF-G/EF-2 subfamily.

The protein localises to the mitochondrion. The catalysed reaction is GTP + H2O = GDP + phosphate + H(+). The protein operates within protein biosynthesis; polypeptide chain elongation. Functionally, mitochondrial GTPase that catalyzes the GTP-dependent ribosomal translocation step during translation elongation. During this step, the ribosome changes from the pre-translocational (PRE) to the post-translocational (POST) state as the newly formed A-site-bound peptidyl-tRNA and P-site-bound deacylated tRNA move to the P and E sites, respectively. Catalyzes the coordinated movement of the two tRNA molecules, the mRNA and conformational changes in the ribosome. This is Elongation factor G, mitochondrial (gfm1) from Dictyostelium discoideum (Social amoeba).